Here is a 327-residue protein sequence, read N- to C-terminus: Ornithine carbamoyltransferase 2, anabolic (327 aa).

Carbamoyl phosphate is bound by residues Arg-109 and 136–139 (HPTQ). Residues Asn-168, Asp-232, and 236 to 237 (SM) contribute to the L-ornithine site. Carbamoyl phosphate-binding positions include 273 to 274 (CL) and Arg-313.

The protein belongs to the aspartate/ornithine carbamoyltransferase superfamily. OTCase family. Homotrimer.

Its subcellular location is the cytoplasm. The catalysed reaction is carbamoyl phosphate + L-ornithine = L-citrulline + phosphate + H(+). It functions in the pathway amino-acid biosynthesis; L-arginine biosynthesis; L-arginine from L-ornithine and carbamoyl phosphate: step 1/3. Plays an important role in the survival and pathogenicity of P.syringae. Phaseolotoxin is a virulence factor that inhibits the catalysis of the host OTCase. Phaseolotoxin-producing bacteria do not suffer autointoxication because they possess the anabolic OTCase ArgK which can function even in the presence of phaseolotoxin. Reversibly catalyzes the transfer of the carbamoyl group from carbamoyl phosphate (CP) to the N(epsilon) atom of ornithine (ORN) to produce L-citrulline, which is a substrate for argininosuccinate synthetase, the enzyme involved in the final step in arginine biosynthesis. The protein is Ornithine carbamoyltransferase 2, anabolic of Pseudomonas savastanoi pv. phaseolicola (Pseudomonas syringae pv. phaseolicola).